The primary structure comprises 316 residues: tRNA dimethylallyltransferase (316 aa).

ATP is bound at residue 12 to 19 (GPTASGKT). Residue 14 to 19 (TASGKT) coordinates substrate. Interaction with substrate tRNA regions lie at residues 37 to 40 (DSAL) and 161 to 165 (QRILR).

The protein belongs to the IPP transferase family. Monomer. Mg(2+) serves as cofactor.

It catalyses the reaction adenosine(37) in tRNA + dimethylallyl diphosphate = N(6)-dimethylallyladenosine(37) in tRNA + diphosphate. Its function is as follows. Catalyzes the transfer of a dimethylallyl group onto the adenine at position 37 in tRNAs that read codons beginning with uridine, leading to the formation of N6-(dimethylallyl)adenosine (i(6)A). The chain is tRNA dimethylallyltransferase from Idiomarina loihiensis (strain ATCC BAA-735 / DSM 15497 / L2-TR).